The primary structure comprises 258 residues: L-aspartate dehydrogenase 1 (258 aa).

Residues alanine 121 and asparagine 181 each coordinate NAD(+). Histidine 211 is a catalytic residue.

The protein belongs to the L-aspartate dehydrogenase family.

It catalyses the reaction L-aspartate + NADP(+) + H2O = oxaloacetate + NH4(+) + NADPH + H(+). The enzyme catalyses L-aspartate + NAD(+) + H2O = oxaloacetate + NH4(+) + NADH + H(+). The protein operates within cofactor biosynthesis; NAD(+) biosynthesis; iminoaspartate from L-aspartate (dehydrogenase route): step 1/1. In terms of biological role, specifically catalyzes the NAD or NADP-dependent dehydrogenation of L-aspartate to iminoaspartate. This chain is L-aspartate dehydrogenase 1, found in Bordetella pertussis (strain Tohama I / ATCC BAA-589 / NCTC 13251).